The sequence spans 221 residues: Prolactin-3B1 (221 aa).

A signal peptide spans 1–30 (MQLPLTPLSFSGTLLLMAMSNFLLWEHVTS). 2 disulfides stabilise this stretch: C81–C196 and C213–C221.

This sequence belongs to the somatotropin/prolactin family.

The protein localises to the secreted. The sequence is that of Prolactin-3B1 (PRL3B1) from Mesocricetus auratus (Golden hamster).